The sequence spans 567 residues: TGF-beta receptor type-2 (567 aa).

The signal sequence occupies residues 1–22; that stretch reads MGRGLLRGLWPLHIVLWTRIAS. The Extracellular portion of the chain corresponds to 23–166; that stretch reads TIPPHVQKSV…NPDLLLVIFQ (144 aa). 6 disulfides stabilise this stretch: C51-C84, C54-C71, C61-C67, C77-C101, C121-C136, and C138-C143. N70 and N94 each carry an N-linked (GlcNAc...) asparagine glycan. The N-linked (GlcNAc...) asparagine glycan is linked to N154. A helical membrane pass occupies residues 167-187; it reads VTGISLLPPLGVAISVIIIFY. Residues 188–567 lie on the Cytoplasmic side of the membrane; that stretch reads CYRVNRQQKL…PEDGSLNTTK (380 aa). One can recognise a Protein kinase domain in the interval 244–544; the sequence is IELDTLVGKG…AERFSELEHL (301 aa). ATP is bound by residues 250 to 258 and K277; that span reads VGKGRFAEV. Catalysis depends on D379, which acts as the Proton acceptor. 3 positions are modified to phosphoserine: S409, S548, and S553. Residues 439–567 form a sufficient for interaction with CLU region; that stretch reads VESFKQTDVY…PEDGSLNTTK (129 aa).

The protein belongs to the protein kinase superfamily. TKL Ser/Thr protein kinase family. TGFB receptor subfamily. In terms of assembly, homodimer. Heterohexamer; TGFB1, TGFB2 and TGFB3 homodimeric ligands assemble a functional receptor composed of two TGFBR1 and TGFBR2 heterodimers to form a ligand-receptor heterohexamer. The respective affinity of TGFRB1 and TGFRB2 for the ligands may modulate the kinetics of assembly of the receptor and may explain the different biological activities of TGFB1, TGFB2 and TGFB3. Component of a complex composed of TSC22D1 (via N-terminus), TGFBR1 and TGFBR2; the interaction between TSC22D1 and TGFBR1 is inhibited by SMAD7 and promoted by TGFB1. Interacts with DAXX. Interacts with DYNLT4. Interacts with ZFYVE9; ZFYVE9 recruits SMAD2 and SMAD3 to the TGF-beta receptor. Interacts with and is activated by SCUBE3; this interaction does not affect TGFB1-binding to TGFBR2. Interacts with VPS39; this interaction is independent of the receptor kinase activity and of the presence of TGF-beta. Interacts with CLU. Homodimer; disulfide-linked. Requires Mg(2+) as cofactor. Mn(2+) serves as cofactor. In terms of processing, phosphorylated on a Ser/Thr residue in the cytoplasmic domain.

It is found in the cell membrane. It localises to the membrane raft. The protein resides in the secreted. It catalyses the reaction L-threonyl-[receptor-protein] + ATP = O-phospho-L-threonyl-[receptor-protein] + ADP + H(+). It carries out the reaction L-seryl-[receptor-protein] + ATP = O-phospho-L-seryl-[receptor-protein] + ADP + H(+). In terms of biological role, transmembrane serine/threonine kinase forming with the TGF-beta type I serine/threonine kinase receptor, TGFBR1, the non-promiscuous receptor for the TGF-beta cytokines TGFB1, TGFB2 and TGFB3. Transduces the TGFB1, TGFB2 and TGFB3 signal from the cell surface to the cytoplasm and thus regulates a plethora of physiological and pathological processes including cell cycle arrest in epithelial and hematopoietic cells, control of mesenchymal cell proliferation and differentiation, wound healing, extracellular matrix production, immunosuppression and carcinogenesis. The formation of the receptor complex composed of 2 TGFBR1 and 2 TGFBR2 molecules symmetrically bound to the cytokine dimer results in the phosphorylation and activation of TGFBR1 by the constitutively active TGFBR2. Activated TGFBR1 phosphorylates SMAD2 which dissociates from the receptor and interacts with SMAD4. The SMAD2-SMAD4 complex is subsequently translocated to the nucleus where it modulates the transcription of the TGF-beta-regulated genes. This constitutes the canonical SMAD-dependent TGF-beta signaling cascade. Also involved in non-canonical, SMAD-independent TGF-beta signaling pathways. Its function is as follows. Has transforming growth factor beta-activated receptor activity. Functionally, binds TGFB1, TGFB2 and TGFB3 in the picomolar affinity range without the participation of additional receptors. Blocks activation of SMAD2 and SMAD3 by TGFB1. This chain is TGF-beta receptor type-2 (TGFBR2), found in Homo sapiens (Human).